A 216-amino-acid polypeptide reads, in one-letter code: Lipoprotein-releasing system ATP-binding protein LolD (216 aa).

The 215-residue stretch at 2-216 folds into the ABC transporter domain; sequence IHLEGITKSF…TIHMVDGNII (215 aa). 34–41 is a binding site for ATP; the sequence is GPSGAGKT.

It belongs to the ABC transporter superfamily. Lipoprotein translocase (TC 3.A.1.125) family. As to quaternary structure, the complex is composed of two ATP-binding proteins (LolD) and two transmembrane proteins (LolC and LolE).

The protein resides in the cell inner membrane. In terms of biological role, part of the ABC transporter complex LolCDE involved in the translocation of mature outer membrane-directed lipoproteins, from the inner membrane to the periplasmic chaperone, LolA. Responsible for the formation of the LolA-lipoprotein complex in an ATP-dependent manner. The chain is Lipoprotein-releasing system ATP-binding protein LolD from Bacteroides fragilis (strain YCH46).